The primary structure comprises 582 residues: DNA primase (582 aa).

Residues 40–64 (CPFHHEKTPSFTVSQKKQFYHCFGC) form a CHC2-type zinc finger. The region spanning 259–341 (EMLLVVEGYM…GRQLKFVFLP (83 aa)) is the Toprim domain. Mg(2+)-binding residues include glutamate 265, aspartate 309, and aspartate 311.

Belongs to the DnaG primase family. Monomer. Interacts with DnaB. It depends on Zn(2+) as a cofactor. Mg(2+) serves as cofactor.

It carries out the reaction ssDNA + n NTP = ssDNA/pppN(pN)n-1 hybrid + (n-1) diphosphate.. RNA polymerase that catalyzes the synthesis of short RNA molecules used as primers for DNA polymerase during DNA replication. The protein is DNA primase of Pasteurella multocida (strain Pm70).